The primary structure comprises 204 residues: Adenylyl-sulfate kinase (204 aa).

34-41 serves as a coordination point for ATP; the sequence is GLSGSGKS. The active-site Phosphoserine intermediate is the Ser108.

It belongs to the APS kinase family.

The enzyme catalyses adenosine 5'-phosphosulfate + ATP = 3'-phosphoadenylyl sulfate + ADP + H(+). It functions in the pathway sulfur metabolism; hydrogen sulfide biosynthesis; sulfite from sulfate: step 2/3. Its function is as follows. Catalyzes the synthesis of activated sulfate. This Phocaeicola vulgatus (strain ATCC 8482 / DSM 1447 / JCM 5826 / CCUG 4940 / NBRC 14291 / NCTC 11154) (Bacteroides vulgatus) protein is Adenylyl-sulfate kinase.